The chain runs to 359 residues: UDP-N-acetylglucosamine--N-acetylmuramyl-(pentapeptide) pyrophosphoryl-undecaprenol N-acetylglucosamine transferase (359 aa).

UDP-N-acetyl-alpha-D-glucosamine-binding positions include 15-17 (TGG), N127, R166, S191, I245, 264-269 (ALTVSE), and Q290.

Belongs to the glycosyltransferase 28 family. MurG subfamily.

The protein localises to the cell inner membrane. It catalyses the reaction di-trans,octa-cis-undecaprenyl diphospho-N-acetyl-alpha-D-muramoyl-L-alanyl-D-glutamyl-meso-2,6-diaminopimeloyl-D-alanyl-D-alanine + UDP-N-acetyl-alpha-D-glucosamine = di-trans,octa-cis-undecaprenyl diphospho-[N-acetyl-alpha-D-glucosaminyl-(1-&gt;4)]-N-acetyl-alpha-D-muramoyl-L-alanyl-D-glutamyl-meso-2,6-diaminopimeloyl-D-alanyl-D-alanine + UDP + H(+). Its pathway is cell wall biogenesis; peptidoglycan biosynthesis. In terms of biological role, cell wall formation. Catalyzes the transfer of a GlcNAc subunit on undecaprenyl-pyrophosphoryl-MurNAc-pentapeptide (lipid intermediate I) to form undecaprenyl-pyrophosphoryl-MurNAc-(pentapeptide)GlcNAc (lipid intermediate II). The polypeptide is UDP-N-acetylglucosamine--N-acetylmuramyl-(pentapeptide) pyrophosphoryl-undecaprenol N-acetylglucosamine transferase (Pseudomonas putida (strain ATCC 47054 / DSM 6125 / CFBP 8728 / NCIMB 11950 / KT2440)).